The primary structure comprises 1637 residues: Glutamate rich 3 (1637 aa).

Disordered regions lie at residues 145 to 192 (PLTL…GSLL), 408 to 453 (PSST…KESC), 478 to 814 (EWKG…QDAG), 1111 to 1194 (VGTS…SPRE), 1238 to 1445 (IEKV…SGER), and 1457 to 1637 (KAEN…RETA). Positions 169–185 (LLSSRQTRNGSKITSGS) are enriched in polar residues. 3 stretches are compositionally biased toward basic and acidic residues: residues 416 to 426 (EKITEKKEEPP), 443 to 452 (KRNEMERKES), and 478 to 487 (EWKGKSGRDV). Over residues 500-523 (YEEDFEVDDEKQDEKVDEDEDQAD) the composition is skewed to acidic residues. Positions 534 to 557 (TESEKDNRNPEKKIETSSEKAHDS) are enriched in basic and acidic residues. Acidic residues predominate over residues 558 to 572 (ENEDTGCSDSEEDDR). Low complexity-rich tracts occupy residues 579 to 590 (SSISSRSHPYSS) and 608 to 617 (EEGSSRSSSS). Basic and acidic residues-rich tracts occupy residues 619-638 (DLRENDDPGKPHFPIEKYLE), 677-693 (ESEHKEPRRVASSEVRA), 769-802 (QEMHTLKEEAMKKDESSQPEDTDAHAGVREESGM), 1115-1130 (EVKEAEREVGSPKTDG), 1264-1307 (LKTE…KDVE), 1319-1329 (KLLEDPPKERA), 1342-1357 (SPKESEATATEHKGGE), and 1402-1412 (RCEEWAAKELD). Polar residues predominate over residues 1476–1487 (VTGSLTGQNWNM). Basic and acidic residues-rich tracts occupy residues 1550–1568 (AEERTGTEDMAPRTEKVAV), 1589–1599 (AQDREGGETKA), and 1614–1637 (GKDEEHQSGAAEEFRESVSQRETA).

The protein localises to the cell projection. The protein resides in the cilium. It is found in the cytoplasm. Its function is as follows. Component of the primary cilium that controls cilium formation and length. May function within retrograde intraflagellar transport (IFT)-associated pathways to remove signaling proteins from primary cilia. Also involved in neuronal vesicle biogenesis and neurotransmitter vesicular function. The sequence is that of Glutamate rich 3 from Mus musculus (Mouse).